A 156-amino-acid chain; its full sequence is Small ribosomal subunit protein uS7 (156 aa).

Belongs to the universal ribosomal protein uS7 family. Part of the 30S ribosomal subunit. Contacts proteins S9 and S11.

One of the primary rRNA binding proteins, it binds directly to 16S rRNA where it nucleates assembly of the head domain of the 30S subunit. Is located at the subunit interface close to the decoding center, probably blocks exit of the E-site tRNA. The sequence is that of Small ribosomal subunit protein uS7 from Exiguobacterium sibiricum (strain DSM 17290 / CCUG 55495 / CIP 109462 / JCM 13490 / 255-15).